A 360-amino-acid chain; its full sequence is Heme A synthase (360 aa).

A run of 9 helical transmembrane segments spans residues 29–49 (WLFA…ATRL), 111–131 (FLGR…WWTG), 139–159 (LGLL…WIMV), 175–195 (LAAH…LAAG), 210–230 (LTAL…GLVA), 242–262 (PLMD…TPWI), 269–289 (VALV…VAAL), 309–329 (AILG…LLAV), and 330–350 (PLWA…MAAV). Position 276 (histidine 276) interacts with heme. Residue histidine 337 coordinates heme.

This sequence belongs to the COX15/CtaA family. Type 2 subfamily. Interacts with CtaB. It depends on heme b as a cofactor.

The protein localises to the cell membrane. The enzyme catalyses Fe(II)-heme o + 2 A + H2O = Fe(II)-heme a + 2 AH2. Its pathway is porphyrin-containing compound metabolism; heme A biosynthesis; heme A from heme O: step 1/1. Functionally, catalyzes the conversion of heme O to heme A by two successive hydroxylations of the methyl group at C8. The first hydroxylation forms heme I, the second hydroxylation results in an unstable dihydroxymethyl group, which spontaneously dehydrates, resulting in the formyl group of heme A. The polypeptide is Heme A synthase (Methylobacterium nodulans (strain LMG 21967 / CNCM I-2342 / ORS 2060)).